The sequence spans 760 residues: ER membrane protein complex subunit 1 (760 aa).

An N-terminal signal peptide occupies residues 1 to 24; that stretch reads MKITCTDLVYVFILLFLNTSCVQA. Residues 25–723 lie on the Lumenal side of the membrane; the sequence is VFSDDAFITD…PSGQFDLMSP (699 aa). Asn73, Asn106, Asn192, Asn202, Asn420, Asn443, Asn574, and Asn578 each carry an N-linked (GlcNAc...) asparagine glycan. Residues 724–744 form a helical membrane-spanning segment; sequence TFEKGKLLITIFVLLVITYFI. Residues 745-760 are Cytoplasmic-facing; that stretch reads RPSVSNKKLKSQWLIK.

Belongs to the EMC1 family. As to quaternary structure, component of the ER membrane protein complex (EMC), which is composed of EMC1, EMC2, EMC3, EMC4, EMC5 and EMC6. Post-translationally, N-glycosylated.

The protein localises to the endoplasmic reticulum membrane. Functionally, part of the endoplasmic reticulum membrane protein complex (EMC) that enables the energy-independent insertion into endoplasmic reticulum membranes of newly synthesized membrane proteins. Preferentially accommodates proteins with transmembrane domains that are weakly hydrophobic or contain destabilizing features such as charged and aromatic residues. Involved in the cotranslational insertion of multi-pass membrane proteins in which stop-transfer membrane-anchor sequences become ER membrane spanning helices. It is also required for the post-translational insertion of tail-anchored/TA proteins in endoplasmic reticulum membranes. By mediating the proper cotranslational insertion of N-terminal transmembrane domains in an N-exo topology, with translocated N-terminus in the lumen of the ER, controls the topology of multi-pass membrane proteins. The chain is ER membrane protein complex subunit 1 (EMC1) from Saccharomyces cerevisiae (strain ATCC 204508 / S288c) (Baker's yeast).